A 161-amino-acid chain; its full sequence is RNA pyrophosphohydrolase (161 aa).

The region spanning 9-155 (PYRPCVGVML…KRRVYRQVVD (147 aa)) is the Nudix hydrolase domain. The short motif at 44-65 (GGIDDGEELHPAALRELSEETG) is the Nudix box element.

The protein belongs to the Nudix hydrolase family. RppH subfamily. It depends on a divalent metal cation as a cofactor.

In terms of biological role, accelerates the degradation of transcripts by removing pyrophosphate from the 5'-end of triphosphorylated RNA, leading to a more labile monophosphorylated state that can stimulate subsequent ribonuclease cleavage. This chain is RNA pyrophosphohydrolase, found in Novosphingobium aromaticivorans (strain ATCC 700278 / DSM 12444 / CCUG 56034 / CIP 105152 / NBRC 16084 / F199).